The primary structure comprises 248 residues: Short-chain dehydrogenase/reductase iacG (248 aa).

6 residues coordinate NADP(+): Ile14, Asn35, Lys41, Asp58, Arg120, and Val187.

The protein belongs to the short-chain dehydrogenases/reductases (SDR) family.

Its pathway is secondary metabolite biosynthesis. Short-chain dehydrogenase/reductase; part of the gene cluster that mediates the biosynthesis of iso-A82775C, a enylepoxycyclohexane and biosynthetic precursor of the chloropestolide anticancer natural products. Within the cluster, the prenyltransferase iacE prenylates siccayne to generate pestalodiol E, using dimethylallyl diphosphate (DMAPP) as cosubstrate. The probable oxidoreductase iacF is then involved in the epoxidation of pestalodiol F to pestalodiol F, which is further converted to pestalofone A by the short-chain dehydrogenase/reductase iacG. Iso-A82775C is subsequently generated from pestalofone A by the short-chain dehydrogenase/reductase iacC. Iso-A82775C is further condensed with maldoxin via a Diels-Alder reaction to produce the anticancer natural products chloropestolides A to E. The protein is Short-chain dehydrogenase/reductase iacG of Pestalotiopsis fici (strain W106-1 / CGMCC3.15140).